The chain runs to 151 residues: Ribosome maturation factor RimP (151 aa).

It belongs to the RimP family.

It localises to the cytoplasm. Its function is as follows. Required for maturation of 30S ribosomal subunits. This chain is Ribosome maturation factor RimP, found in Desulfotalea psychrophila (strain LSv54 / DSM 12343).